The chain runs to 379 residues: Chaperone protein DnaJ (379 aa).

One can recognise a J domain in the interval 5 to 69; that stretch reads DYYEVLGISK…NKRASYDQFG (65 aa). Residues 136 to 218 form a CR-type zinc finger; that stretch reads GTTKEISIRK…CHGKGTENKT (83 aa). Zn(2+) is bound by residues Cys-149, Cys-152, Cys-166, Cys-169, Cys-192, Cys-195, Cys-206, and Cys-209. CXXCXGXG motif repeat units lie at residues 149-156, 166-173, 192-199, and 206-213; these read CETCHGDG, CSYCNGAG, CPKCNGSG, and CPTCHGKG.

It belongs to the DnaJ family. As to quaternary structure, homodimer. Zn(2+) serves as cofactor.

It is found in the cytoplasm. Functionally, participates actively in the response to hyperosmotic and heat shock by preventing the aggregation of stress-denatured proteins and by disaggregating proteins, also in an autonomous, DnaK-independent fashion. Unfolded proteins bind initially to DnaJ; upon interaction with the DnaJ-bound protein, DnaK hydrolyzes its bound ATP, resulting in the formation of a stable complex. GrpE releases ADP from DnaK; ATP binding to DnaK triggers the release of the substrate protein, thus completing the reaction cycle. Several rounds of ATP-dependent interactions between DnaJ, DnaK and GrpE are required for fully efficient folding. Also involved, together with DnaK and GrpE, in the DNA replication of plasmids through activation of initiation proteins. This chain is Chaperone protein DnaJ, found in Staphylococcus aureus (strain bovine RF122 / ET3-1).